We begin with the raw amino-acid sequence, 89 residues long: Cornifin (89 aa).

Residues 1 to 29 (MSSQQQKQPCTPPPQLQQQQVKQPCQPPP) form a disordered region. An N-acetylserine modification is found at serine 2. Tandem repeats lie at residues 3-14 (SQQQKQPCTPPP), 18-29 (QQQVKQPCQPPP), 31-38 (EPCIPKTK), 39-46 (EPCLPKVP), 47-54 (EPCHPKVP), 55-62 (EPCQPKVP), 63-70 (EPCHPKVP), and 71-78 (EPCPSTVT). A 2 X 12 AA approximate repeats region spans residues 3–29 (SQQQKQPCTPPPQLQQQQVKQPCQPPP). A 6 X 8 AA approximate tandem repeats region spans residues 31 to 78 (EPCIPKTKEPCLPKVPEPCHPKVPEPCQPKVPEPCHPKVPEPCPSTVT). The segment at 68–89 (KVPEPCPSTVTPAPAQQKTKQK) is disordered. A compositionally biased stretch (polar residues) spans 75–89 (STVTPAPAQQKTKQK).

It belongs to the cornifin (SPRR) family.

It localises to the cytoplasm. Cross-linked envelope protein of keratinocytes. It is a keratinocyte protein that first appears in the cell cytosol, but ultimately becomes cross-linked to membrane proteins by transglutaminase. All that results in the formation of an insoluble envelope beneath the plasma membrane. The polypeptide is Cornifin (SPRR1) (Macaca mulatta (Rhesus macaque)).